The sequence spans 407 residues: RING finger protein 44 (407 aa).

Residues 26 to 58 (LSSSPGQLWGRPSNLSVEEHRASAPAGRSPRML) are disordered. The RING-type; atypical zinc finger occupies 355-396 (CVVCFSDFEVRQLLRVLPCNHEFHAKCVDKWLKANRTCPICR).

The polypeptide is RING finger protein 44 (Rnf44) (Mus musculus (Mouse)).